The following is a 480-amino-acid chain: Amino acid permease 5 (480 aa).

The disordered stretch occupies residues 1-25 (MVVQNVQDLDVLPKHSSDSFDDDGR). The Cytoplasmic segment spans residues 1–31 (MVVQNVQDLDVLPKHSSDSFDDDGRPKRTGT). Residues 11-25 (VLPKHSSDSFDDDGR) show a composition bias toward basic and acidic residues. 2 helical membrane passes run 32 to 52 (VWTA…LSLA) and 53 to 73 (WAVA…FSFV). At 74–120 (TFYTSTLLCSCYRSGDSVTGKRNYTYMDAIHSNLGGIKVKVCGVVQY) the chain is on the cytoplasmic side. Residues 121–141 (VNLFGTAIGYTIASAISLVAI) form a helical membrane-spanning segment. The Extracellular segment spans residues 142–157 (QRTSCQQMNGPNDPCH). Residues 158 to 178 (VNGNVYMIAFGIVQIIFSQIP) form a helical membrane-spanning segment. At 179–182 (DFDQ) the chain is on the cytoplasmic side. Residues 183-203 (LWWLSIVAAVMSFAYSAIGLG) traverse the membrane as a helical segment. The Extracellular segment spans residues 204 to 241 (LGVSKVVENKEIKGSLTGVTVGTVTLSGTVTSSQKIWR). Residues 242–262 (TFQSLGNIAFAYSYSMILIEI) traverse the membrane as a helical segment. Topologically, residues 263-280 (QDTVKSPPAEVNTMRKAT) are cytoplasmic. The helical transmembrane segment at 281 to 301 (FVSVAVTTVFYMLCGCVGYAA) threads the bilayer. Residues 302–328 (FGDNAPGNLLAHGGFRNPYWLLDIANL) lie on the Extracellular side of the membrane. Residues 329-349 (AIVIHLVGAYQVYCQPLFAFV) traverse the membrane as a helical segment. The Cytoplasmic portion of the chain corresponds to 350 to 383 (EKEASRRFPESEFVTKEIKIQLFPGKPFNLNLFR). Residues 384-404 (LVWRTFFVMTTTLISMLMPFF) traverse the membrane as a helical segment. At 405–406 (ND) the chain is on the extracellular side. Residues 407–427 (VVGLLGAIGFWPLTVYFPVEM) traverse the membrane as a helical segment. Residues 428-445 (YIAQKNVPRWGTKWVCLQ) are Cytoplasmic-facing. The helical transmembrane segment at 446–466 (VLSVTCLFVSVAAAAGSVIGI) threads the bilayer. Topologically, residues 467–480 (VSDLKVYKPFQSEF) are extracellular.

It belongs to the amino acid/polyamine transporter 2 family. Amino acid/auxin permease (AAAP) (TC 2.A.18.2) subfamily. Expressed in leaves, stems, roots, siliques and flowers.

The protein localises to the cell membrane. Inhibited by 2,4-dinitrophenol. Functionally, amino acid-proton symporter. Stereospecific transporter with a broad specificity for glutamate and both neutral and basic amino acids. Reduced affinities for asparagine and valine. High affinity transport of the cationic amino acids arginine and lysine, but not of histidine. The polypeptide is Amino acid permease 5 (AAP5) (Arabidopsis thaliana (Mouse-ear cress)).